A 967-amino-acid chain; its full sequence is Vacuolar membrane protease (967 aa).

The Cytoplasmic segment spans residues 1–16 (MARPSLSRSNPLGFTP). The helical transmembrane segment at 17–37 (WPVTVITAVVYLALVVPLLVV) threads the bilayer. Topologically, residues 38 to 387 (HHVVPSAPSS…SAFVVFELHT (350 aa)) are vacuolar. N-linked (GlcNAc...) asparagine glycosylation is found at Asn-53 and Asn-119. Residues His-171 and Asp-183 each contribute to the Zn(2+) site. Residue Glu-217 is the Proton acceptor of the active site. Residues Glu-218, Glu-243, and His-316 each coordinate Zn(2+). The helical transmembrane segment at 388-408 (LFALSVTLLVVAPLVLLVTSI) threads the bilayer. Topologically, residues 409-441 (ALNRADKMYLFRASASPEDSDGSEAVLLHGVRG) are cytoplasmic. A helical transmembrane segment spans residues 442 to 462 (FFRFPFLLVIPTAVTVGLAYL). The Vacuolar segment spans residues 463–472 (VTKFNPYIIH). Residues 473–493 (SSEYAVWSMMISAWVFLAWFV) traverse the membrane as a helical segment. Residues 494 to 507 (SRVADFARPSAFHR) are Cytoplasmic-facing. Residues 508–528 (VYTLTWLFLVEWVLLVISTVY) form a helical membrane-spanning segment. Topologically, residues 529 to 532 (ENKY) are vacuolar. A helical transmembrane segment spans residues 533 to 553 (GLAGGYFVFFAFAGTFLATWI). Residues 554-663 (SYLELFALPR…WSIHLPKWVW (110 aa)) are Cytoplasmic-facing. Positions 579 to 612 (SSHGSRLGTASGEDVEDGEDEDEDDDGTTAEATE) are disordered. The segment covering 591–606 (EDVEDGEDEDEDDDGT) has biased composition (acidic residues). A helical transmembrane segment spans residues 664–684 (VLQFLLTAPLVLTFVGPLALL). The Vacuolar segment spans residues 685-700 (LTSALRQTGQDGSSSL). Residues 701–721 (FIYIAVAALTTLLFIPLLPFI) traverse the membrane as a helical segment. Residues 722-727 (HRYTHH) are Cytoplasmic-facing. Residues 728-748 (IPLFLLCVFAGTLIYNLVAFP) traverse the membrane as a helical segment. At 749–967 (FSPANRLKLF…LVEGSRRFEI (219 aa)) the chain is on the vacuolar side. Asn-795 and Asn-832 each carry an N-linked (GlcNAc...) asparagine glycan.

Belongs to the peptidase M28 family. Zn(2+) serves as cofactor.

It localises to the vacuole membrane. Functionally, may be involved in vacuolar sorting and osmoregulation. The chain is Vacuolar membrane protease from Neosartorya fischeri (strain ATCC 1020 / DSM 3700 / CBS 544.65 / FGSC A1164 / JCM 1740 / NRRL 181 / WB 181) (Aspergillus fischerianus).